A 75-amino-acid chain; its full sequence is Meucin-49 (75 aa).

Positions 1-22 (MNKKILLVIFIVTMLIVDEVNS) are cleaved as a signal peptide.

Belongs to the non-disulfide-bridged peptide (NDBP) superfamily. Long chain multifunctional peptide (group 2) family. Expressed by the venom gland.

It localises to the secreted. Insecticidal toxin and antimicrobial peptide with potent activity against both Gram-negative and -positive bacteria, as well as against fungi. Acts by disrupting bacterial membrane integrity. Shows broad-spectrum and highly potent bactericidal activities against the Gram-positive bacteria B.cereus, B.megaterium, B.subtilis, M.luteus, S.aureus, S.epidermidis, S.warneri, S.griseus, S.scabiei, S.mutans, S.salivarius, and S.sanguinis. Also exhibits a wide spectrum of activity against the Gram-negative bacteria A.faecalis, E.coli, P.aeruginosa, P.solanacearum, S.enterica, S.marcescens, and S.maltophilia. Also shows antimicrobial activities against the fungal strains Aspergillus flavus, A.fumigatus, A.nidulans, A.niger, Beauveria bassiana, and Saccharomyces cerevisiae. Its antibiotic activity is potentiated by other antibacterial peptides such as MeuNaTxbeta-4. Also induces cytolysis on mice, lizards and birds erythrocytes. This chain is Meucin-49, found in Mesobuthus eupeus (Lesser Asian scorpion).